Here is a 511-residue protein sequence, read N- to C-terminus: Caspase-8 (511 aa).

The propeptide occupies 1–242 (MSGHNILTQL…MDGNGIANES (242 aa)). Catalysis depends on residues His352 and Cys393. The propeptide occupies 406 to 415 (KINASTKSPC).

It belongs to the peptidase C14A family. As to quaternary structure, heterotetramer that consists of two anti-parallel arranged heterodimers, each one formed by a 15 kDa (caspase-8 subunit p15) and a 10 kDa (caspase-8 subunit p10) subunit. Interacts with the N-terminus of Fadd.

It is found in the cytoplasm. It carries out the reaction Strict requirement for Asp at position P1 and has a preferred cleavage sequence of (Leu/Asp/Val)-Glu-Thr-Asp-|-(Gly/Ser/Ala).. In terms of biological role, effector of the programmed cell death (PCD) activators rpr, grim and W. May play an apoptotic role in the germline as well as soma. Role in immune response, required to resist Gram-negative bacterial infections by regulating DptA. Fadd interacts with Dredd, Fadd promotes cleavage of Dredd and is necessary and sufficient for enhancing Dredd-induced apoptosis. The sequence is that of Caspase-8 from Drosophila pseudoobscura pseudoobscura (Fruit fly).